The sequence spans 346 residues: Phenylalanine--tRNA ligase alpha subunit (346 aa).

Glu261 contributes to the Mg(2+) binding site.

This sequence belongs to the class-II aminoacyl-tRNA synthetase family. Phe-tRNA synthetase alpha subunit type 1 subfamily. As to quaternary structure, tetramer of two alpha and two beta subunits. Mg(2+) serves as cofactor.

It is found in the cytoplasm. The enzyme catalyses tRNA(Phe) + L-phenylalanine + ATP = L-phenylalanyl-tRNA(Phe) + AMP + diphosphate + H(+). The protein is Phenylalanine--tRNA ligase alpha subunit of Streptococcus agalactiae serotype III (strain NEM316).